The chain runs to 289 residues: MSEPFGIVAGALNVAGLFNNCVDCFEYVQLGRPFGRDYERCQLRLDIAKARLSRWGEAVKINDDPRFHSDAPTDKSVQLAKSIVEEILLLFESAQKTSKRYELVADQQDLVVFEDKDMKPIGRALHRRLNDLVSRRQKQTSLAKKTAWALYDGKSLEKIVDQVARFVDELEKAFPIEAVCHKLAEIEIEEVEDEASLTILKDAAGGIDAAMSDAAAQKIDAIVGRNSAKDIRTEERARVQLGNVVTAAALHGGIRISDQTTNSVETVVGKGESRVLIGNEYGGKGFWDN.

The globular domain stretch occupies residues 1–227 (MSEPFGIVAG…KIDAIVGRNS (227 aa)). The tract at residues 218–289 (KIDAIVGRNS…EYGGKGFWDN (72 aa)) is prion domain (PrD).

Homodimer. Forms heterodimers with het-S.

Its subcellular location is the cytoplasm. In terms of biological role, responsible for heterokaryon incompatibility, a process that ensures that during spontaneous, vegetative cell fusion only compatible cells from the same colony survive (non-self-recognition). Forms a prion for the non-Mendelian trait [het-s]. Interacts with het-S from incompatible cells to trigger a lethal reaction that prevents the formation of viable heterokaryons. It is unknown if the native, soluble protein has a cellular function. This Podospora anserina (Pleurage anserina) protein is Heterokaryon incompatibility protein s (het-s).